The sequence spans 387 residues: Erythronate-4-phosphate dehydrogenase (387 aa).

Residues serine 45 and threonine 67 each coordinate substrate. Aspartate 147 provides a ligand contact to NAD(+). Arginine 208 is an active-site residue. Position 232 (aspartate 232) interacts with NAD(+). The active site involves glutamate 237. Histidine 254 acts as the Proton donor in catalysis. Glycine 257 is an NAD(+) binding site. Residue tyrosine 258 coordinates substrate.

The protein belongs to the D-isomer specific 2-hydroxyacid dehydrogenase family. PdxB subfamily. In terms of assembly, homodimer.

It is found in the cytoplasm. The catalysed reaction is 4-phospho-D-erythronate + NAD(+) = (R)-3-hydroxy-2-oxo-4-phosphooxybutanoate + NADH + H(+). It participates in cofactor biosynthesis; pyridoxine 5'-phosphate biosynthesis; pyridoxine 5'-phosphate from D-erythrose 4-phosphate: step 2/5. Catalyzes the oxidation of erythronate-4-phosphate to 3-hydroxy-2-oxo-4-phosphonooxybutanoate. The protein is Erythronate-4-phosphate dehydrogenase of Shewanella woodyi (strain ATCC 51908 / MS32).